A 154-amino-acid chain; its full sequence is UPF0178 protein RC1_2062 (154 aa).

This sequence belongs to the UPF0178 family.

The protein is UPF0178 protein RC1_2062 of Rhodospirillum centenum (strain ATCC 51521 / SW).